The following is a 216-amino-acid chain: Large ribosomal subunit protein bL21 (216 aa).

Belongs to the bacterial ribosomal protein bL21 family. In terms of assembly, part of the 50S ribosomal subunit. Contacts protein L20.

In terms of biological role, this protein binds to 23S rRNA in the presence of protein L20. This Roseobacter denitrificans (strain ATCC 33942 / OCh 114) (Erythrobacter sp. (strain OCh 114)) protein is Large ribosomal subunit protein bL21.